We begin with the raw amino-acid sequence, 504 residues long: Anaerobic nitric oxide reductase transcription regulator NorR (504 aa).

Asp57 carries the 4-aspartylphosphate modification. The Sigma-54 factor interaction domain maps to 187-416 (MIGLSPGMTQ…LEHAIHRAVV (230 aa)). ATP contacts are provided by residues 215–222 (GETGTGKE) and 278–287 (ADNGTLFLDE). Residues 479 to 498 (WAACARMLETDVANLHRLAK) constitute a DNA-binding region (H-T-H motif).

The protein operates within nitrogen metabolism; nitric oxide reduction. Functionally, required for the expression of anaerobic nitric oxide (NO) reductase, acts as a transcriptional activator for at least the norVW operon. Activation also requires sigma-54. This chain is Anaerobic nitric oxide reductase transcription regulator NorR, found in Escherichia coli O127:H6 (strain E2348/69 / EPEC).